We begin with the raw amino-acid sequence, 488 residues long: Probable glycine dehydrogenase (decarboxylating) subunit 2 (488 aa).

N6-(pyridoxal phosphate)lysine is present on Lys-273.

This sequence belongs to the GcvP family. C-terminal subunit subfamily. The glycine cleavage system is composed of four proteins: P, T, L and H. In this organism, the P 'protein' is a heterodimer of two subunits. Requires pyridoxal 5'-phosphate as cofactor.

It catalyses the reaction N(6)-[(R)-lipoyl]-L-lysyl-[glycine-cleavage complex H protein] + glycine + H(+) = N(6)-[(R)-S(8)-aminomethyldihydrolipoyl]-L-lysyl-[glycine-cleavage complex H protein] + CO2. Its function is as follows. The glycine cleavage system catalyzes the degradation of glycine. The P protein binds the alpha-amino group of glycine through its pyridoxal phosphate cofactor; CO(2) is released and the remaining methylamine moiety is then transferred to the lipoamide cofactor of the H protein. The protein is Probable glycine dehydrogenase (decarboxylating) subunit 2 of Halalkalibacterium halodurans (strain ATCC BAA-125 / DSM 18197 / FERM 7344 / JCM 9153 / C-125) (Bacillus halodurans).